A 233-amino-acid chain; its full sequence is Ribosomal RNA small subunit methyltransferase G (233 aa).

The interval 1–25 (MASRQSPMAVSQPDHADRSAALQLT) is disordered. S-adenosyl-L-methionine is bound by residues G85, F90, and R155.

Belongs to the methyltransferase superfamily. RNA methyltransferase RsmG family.

The protein localises to the cytoplasm. It carries out the reaction guanosine(527) in 16S rRNA + S-adenosyl-L-methionine = N(7)-methylguanosine(527) in 16S rRNA + S-adenosyl-L-homocysteine. Its function is as follows. Specifically methylates the N7 position of guanine in position 527 of 16S rRNA. The polypeptide is Ribosomal RNA small subunit methyltransferase G (Rhodopseudomonas palustris (strain BisB5)).